Consider the following 44-residue polypeptide: Unknown protein 9 (44 aa).

The sequence is that of Unknown protein 9 from Pseudotsuga menziesii (Douglas-fir).